A 321-amino-acid chain; its full sequence is MIDFRPFYQQIATTNLSDWLETLPLQLKEWETQTHGDYAKWSKIVDFLPDLHADEIDLKSAVKSDRTSPLSEGEKQRIIHHLKQLMPWRKGPYHLFGIHVDCEWRSDFKWDRVLPHLAPLQGRTILDVGCGSGYHMWRMVGEGAKMVVGIDPTELFLCQFEAVRKLLNNDRRANLIPLGIEQMQPLAAFDTVFSMGVLYHRKSPLDHLSQLKNQLVKGGELVLETLVVDGDVNTVLVPIDRYAKMKNVYFIPSVAALINWLEKVGFTNVRCVDVATTTLEEQRKTDWLENESLIDFLDPNDHSKTIEGYHAPKRAVILANK.

Carboxy-S-adenosyl-L-methionine-binding positions include lysine 90, tryptophan 104, lysine 109, glycine 129, 151 to 153 (DPT), 180 to 181 (IE), methionine 195, tyrosine 199, and arginine 314.

This sequence belongs to the class I-like SAM-binding methyltransferase superfamily. CmoB family. In terms of assembly, homotetramer.

The catalysed reaction is carboxy-S-adenosyl-L-methionine + 5-hydroxyuridine(34) in tRNA = 5-carboxymethoxyuridine(34) in tRNA + S-adenosyl-L-homocysteine + H(+). In terms of biological role, catalyzes carboxymethyl transfer from carboxy-S-adenosyl-L-methionine (Cx-SAM) to 5-hydroxyuridine (ho5U) to form 5-carboxymethoxyuridine (cmo5U) at position 34 in tRNAs. This chain is tRNA U34 carboxymethyltransferase, found in Haemophilus influenzae (strain PittGG).